Consider the following 758-residue polypeptide: Microtubule-associated protein tau (758 aa).

The span at 1 to 26 (MAEPHQEFDVTEDHAGTYGLGDRKDQ) shows a compositional bias: basic and acidic residues. Residues 1-573 (MAEPHQEFDV…PVPMPDLKNV (573 aa)) are disordered. Ala-2 bears the N-acetylalanine mark. 2 positions are modified to phosphotyrosine: Tyr-18 and Tyr-29. Lys-44 participates in a covalent cross-link: Glycyl lysine isopeptide (Lys-Gly) (interchain with G-Cter in ubiquitin). Ser-46 and Ser-61 each carry phosphoserine. Positions 61–71 (SETSDAKSTPT) are enriched in polar residues. Thr-69, Thr-71, and Thr-111 each carry phosphothreonine. Composition is skewed to basic and acidic residues over residues 179–189 (EGGRHAPELLK) and 207–216 (GGKERPGSKE). Position 214 is a phosphoserine (Ser-214). Positions 217–228 (EVDEDRDVDESS) are enriched in acidic residues. Residues 314–323 (EQAHSEEHLR) are compositionally biased toward basic and acidic residues. Over residues 325–340 (AAFPGAPGEGPEAQGP) the composition is skewed to low complexity. Composition is skewed to basic and acidic residues over residues 344-356 (EDAKEADLPEPSE) and 381-393 (KSKDGTGSDDKKA). Over residues 440–452 (KYVSSVTPRTGSS) the composition is skewed to polar residues. The span at 455–466 (KEMKLKGADGKT) shows a compositional bias: basic and acidic residues. Position 470 is a phosphothreonine (Thr-470). Arg-472 bears the Omega-N-methylarginine mark. Lys-480 is modified (N6,N6-dimethyllysine; alternate). Residue Lys-480 is modified to N6-acetyllysine; alternate. Residues Thr-486, Thr-492, and Thr-498 each carry the phosphothreonine modification. Positions 491 to 503 (KTPPAPKTPPSSG) are enriched in pro residues. Residues Ser-502, Ser-508, and Ser-512 each carry the phosphoserine modification. A compositionally biased stretch (low complexity) spans 504-531 (EPPKSGDRSGYSSPGSPGTPGSRSRTPS). Tyr-514 carries the post-translational modification Phosphotyrosine. Phosphoserine is present on residues Ser-515, Ser-516, and Ser-519. Phosphothreonine occurs at positions 522 and 529. Phosphoserine is present on Ser-531. The residue at position 534 (Thr-534) is a Phosphothreonine. Lys-542 carries the post-translational modification N6-acetyllysine. Thr-548 is subject to Phosphothreonine. A phosphoserine mark is found at Ser-552 and Ser-554. Tau/MAP repeat units follow at residues 561–591 (QTAPVPMPDLKNVKSKIGSTENLKHQPGGGK), 592–622 (VQIINKKLDLSNVQSKCGSKDNIKHVPGGGS), 623–653 (VQIVYKPVDLSKVTSKCGSLGNIHHKPGGGQ), and 654–685 (VEVKSEKLDFKDRVQSKIGSLDNITHVPGGGH). Lys-571 is covalently cross-linked (Glycyl lysine isopeptide (Lys-Gly) (interchain with G-Cter in ubiquitin)). At Lys-576 the chain carries N6-acetyllysine; alternate. Lys-576 is subject to N6-methyllysine; alternate. A Glycyl lysine isopeptide (Lys-Gly) (interchain with G-Cter in ubiquitin); alternate cross-link involves residue Lys-576. Ser-579 carries the phosphoserine modification. A Glycyl lysine isopeptide (Lys-Gly) (interchain with G-Cter in ubiquitin) cross-link involves residue Lys-584. Residue Lys-598 is modified to N6-acetyllysine; alternate. A Glycyl lysine isopeptide (Lys-Gly) (interchain with G-Cter in ubiquitin); alternate cross-link involves residue Lys-598. Ser-602 and Ser-606 each carry phosphoserine. Lys-607 carries the post-translational modification N6-acetyllysine. Ser-610 is modified (phosphoserine). Lys-615 bears the N6-acetyllysine; alternate mark. Lys-615 participates in a covalent cross-link: Glycyl lysine isopeptide (Lys-Gly) (interchain with G-Cter in ubiquitin); alternate. At Ser-622 the chain carries Phosphoserine. Lys-628 is subject to N6,N6-dimethyllysine; alternate. Lys-628, Lys-634, and Lys-638 each carry N6-acetyllysine; alternate. Glycyl lysine isopeptide (Lys-Gly) (interchain with G-Cter in ubiquitin); alternate cross-links involve residues Lys-628, Lys-634, and Lys-638. Ser-641 is subject to Phosphoserine. N6-acetyllysine; alternate is present on residues Lys-648, Lys-660, and Lys-664. Glycyl lysine isopeptide (Lys-Gly) (interchain with G-Cter in ubiquitin); alternate cross-links involve residues Lys-648, Lys-660, and Lys-664. The residue at position 666 (Arg-666) is an Omega-N-methylarginine. A Phosphoserine modification is found at Ser-669. A Glycyl lysine isopeptide (Lys-Gly) (interchain with G-Cter in ubiquitin) cross-link involves residue Lys-670. Phosphoserine is present on Ser-673. Lys-686 is subject to N6-acetyllysine; alternate. A Glycyl lysine isopeptide (Lys-Gly) (interchain with G-Cter in ubiquitin); alternate cross-link involves residue Lys-686. Lys-692 participates in a covalent cross-link: Glycyl lysine isopeptide (Lys-Gly) (interchain with G-Cter in ubiquitin). At Lys-702 the chain carries N6-acetyllysine; alternate. A Glycyl lysine isopeptide (Lys-Gly) (interchain with G-Cter in ubiquitin); alternate cross-link involves residue Lys-702. Tyr-711 carries the phosphotyrosine modification. 2 positions are modified to phosphoserine: Ser-713 and Ser-717. Residues 715-734 (VVSGDTSPRHLSNVSSTGSI) form a disordered region. A compositionally biased stretch (polar residues) spans 718–733 (GDTSPRHLSNVSSTGS). Thr-720 is modified (phosphothreonine). Residues Ser-721, Ser-726, Ser-733, and Ser-739 each carry the phosphoserine modification. Phosphothreonine is present on Thr-744.

As to quaternary structure, interacts with MARK1, MARK2, MARK3 and MARK4. Interacts with SQSTM1 when polyubiquitinated. Interacts with PSMC2 through SQSTM1. Interacts with FKBP4. Binds to CSNK1D. Interacts with SGK1. Interacts with EPM2A; the interaction dephosphorylates MAPT at Ser-396. Interacts with PIN1. Interacts with LRRK2. Interacts with LRP1, leading to endocytosis; this interaction is reduced in the presence of LRPAP1/RAP. Post-translationally, polyubiquitinated. Requires functional TRAF6 and may provoke SQSTM1-dependent degradation by the proteasome. In terms of processing, phosphorylation at various serine and threonine residues in S-P or T-P motifs by proline-directed protein kinases (PDPK1, CDK1, CDK5, GSK3, MAPK) (a few sites per protein in interphase, more in mitosis), and at serine residues in K-X-G-S motifs by MAP/microtubule affinity-regulating kinase (MARK1, MARK2, MARK3 or MARK4), causing detachment from microtubules, and their disassembly. Phosphorylation at Ser-579 by BRSK1 and BRSK2 in neurons affects ability to bind microtubules and plays a role in neuron polarization. Phosphorylated by PHK. Dephosphorylation at several serine and threonine residues by the serine/threonine phosphatase PPP5C. Phosphorylation at Ser-214 by SGK1 mediates microtubule depolymerization and neurite formation in hippocampal neurons.

It localises to the cytoplasm. Its subcellular location is the cytosol. The protein resides in the cell membrane. It is found in the cytoskeleton. The protein localises to the cell projection. It localises to the axon. Its subcellular location is the dendrite. Promotes microtubule assembly and stability, and might be involved in the establishment and maintenance of neuronal polarity. The C-terminus binds axonal microtubules while the N-terminus binds neural plasma membrane components, suggesting that tau functions as a linker protein between both. Axonal polarity is predetermined by tau localization (in the neuronal cell) in the domain of the cell body defined by the centrosome. The short isoforms allow plasticity of the cytoskeleton whereas the longer isoforms may preferentially play a role in its stabilization. The sequence is that of Microtubule-associated protein tau (MAPT) from Pongo pygmaeus (Bornean orangutan).